We begin with the raw amino-acid sequence, 598 residues long: Probable translation initiation factor IF-2 (598 aa).

The region spanning L3–E223 is the tr-type G domain. Residues G12–T19 form a G1 region. G12–T19 provides a ligand contact to GTP. Residues G37 to H41 are G2. The tract at residues D76–G79 is G3. GTP is bound by residues D76–H80 and N130–D133. Residues N130–D133 form a G4 region. The G5 stretch occupies residues S200 to M202.

Belongs to the TRAFAC class translation factor GTPase superfamily. Classic translation factor GTPase family. IF-2 subfamily.

Its function is as follows. Function in general translation initiation by promoting the binding of the formylmethionine-tRNA to ribosomes. Seems to function along with eIF-2. This chain is Probable translation initiation factor IF-2, found in Methanococcus aeolicus (strain ATCC BAA-1280 / DSM 17508 / OCM 812 / Nankai-3).